The sequence spans 359 residues: Medium-wave-sensitive opsin 1 (359 aa).

Residues 1 to 47 are Extracellular-facing; the sequence is MAQQLTGEQTLDHYEDSTQASIFTYTNSNSTRGPFEGPNYHIAPRWV. The interval 12–38 is required for 11-cis-retinal regeneration; it reads DHYEDSTQASIFTYTNSNSTRGPFEGP. Asn-29 carries an N-linked (GlcNAc...) asparagine glycan. Residues 48–72 form a helical membrane-spanning segment; sequence YHLTSTWMILVVIASVFTNGLVLAA. At 73 to 84 the chain is on the cytoplasmic side; the sequence is TMRFKKLRHPLN. The helical transmembrane segment at 85-110 threads the bilayer; that stretch reads WILVNLAVADLAETIIASTISVVNQI. Residues 111-124 are Extracellular-facing; it reads YGYFVLGHPLCVIE. Cys-121 and Cys-198 are oxidised to a cystine. Residues 125 to 144 form a helical membrane-spanning segment; that stretch reads GYIVSLCGITGLWSLAIISW. Over 145-163 the chain is Cytoplasmic; the sequence is ERWLVVCKPFGNVRFDAKL. Residues 164–187 traverse the membrane as a helical segment; the sequence is ATVGIVFSWVWAAVWTAPPIFGWS. Topologically, residues 188 to 213 are extracellular; that stretch reads RYWPYGLKTSCGPDVFSGTSYPGVQS. The helical transmembrane segment at 214-241 threads the bilayer; it reads YMMVLMVTCCIFPLSIIVLCYLQVWLAI. The Cytoplasmic segment spans residues 242 to 263; it reads RAVAKQQKESESTQKAEKEVTR. A helical membrane pass occupies residues 264 to 287; that stretch reads MVVVMVFAYCLCWGPYTFFACFAT. At 288–295 the chain is on the extracellular side; sequence AHPGYAFH. Residues 296–320 form a helical membrane-spanning segment; it reads PLVASLPSYFAKSATIYNPIIYVFM. Lys-307 carries the post-translational modification N6-(retinylidene)lysine. Topologically, residues 321-359 are cytoplasmic; that stretch reads NRQFRNCILQLFGKKVDDSSELSSTSKTEVSSVSSVSPA.

Belongs to the G-protein coupled receptor 1 family. Opsin subfamily. As to quaternary structure, monomer. Homodimer. Homotetramer. In terms of processing, O-glycosylated. Post-translationally, phosphorylated on some or all of the serine and threonine residues present in the C-terminal region. In terms of tissue distribution, expressed in cone photoreceptor cells.

The protein resides in the membrane. Functionally, visual pigments are the light-absorbing molecules that mediate vision. They consist of an apoprotein, opsin, covalently linked to cis-retinal. May increase spectral sensitivity in dim light. This is Medium-wave-sensitive opsin 1 (Opn1mw) from Rattus norvegicus (Rat).